A 546-amino-acid chain; its full sequence is Capsid protein VP1 (546 aa).

The segment at 1 to 38 is disordered; sequence MMMASKDAPQSADGASGAGQLVPEVNTADPLPMEPVAG. The segment at 1-226 is shell domain; it reads MMMASKDAPQ…FLFLVPPTIE (226 aa). The segment at 227–279 is P1 sub-domain 1; that stretch reads QKTRAFTVPNIPLQTLSNSRFPSLIQGMILSPDASQVVQFQNGRCLIDGQLLG. The tract at residues 227 to 545 is protruding domain; sequence QKTRAFTVPN…TARGRLGVRR (319 aa). A P2 sub-domain region spans residues 280 to 416; that stretch reads TTPATSGQLF…GSSLSQAANL (137 aa). Residues 417-546 are P1 sub-domain 2; the sequence is APPVFPPGFG…ARGRLGVRRI (130 aa). The segment at 538–545 is plays a role in binding to host histo-blood group structures antigens and in the formation of P-particles; it reads RGRLGVRR.

It belongs to the caliciviridae capsid protein family. In terms of assembly, homodimer. Homomultimer. Interacts with the minor capsid protein VP2. Interacts (via C-terminus) with host type I histo-blood group structures antigens at the surface of target cells. Post-translationally, may be cleaved by host protease to generate soluble capsid protein. Assembled capsid cannot be cleaved.

The protein resides in the virion. Its subcellular location is the host cytoplasm. Its function is as follows. Capsid protein self assembles to form an icosahedral capsid with a T=3 symmetry, about 38 nm in diameter, and consisting of 180 capsid proteins. A smaller form of capsid with a diameter of 23 nm might be capsid proteins assembled as icosahedron with T=1 symmetry. The capsid encapsulates the genomic RNA and is decorated with VP2 proteins. Attaches virion to target cells by binding histo-blood group antigens (HBGAs) present on gastroduodenal epithelial cells. Functionally, the soluble capsid protein may play a role in viral immunoevasion. This Southampton virus (strain GI/Human/United Kingdom/Southampton/1991) (SHV) protein is Capsid protein VP1.